Reading from the N-terminus, the 453-residue chain is Ethanolamine ammonia-lyase large subunit (453 aa).

Residues 160–162 (RLQ) and Asn193 contribute to the substrate site. Pro194 and Gln246 together coordinate adenosylcob(III)alamin. Substrate is bound at residue Glu287. Position 295 (Ser295) interacts with adenosylcob(III)alamin. A substrate-binding site is contributed by Asp362. Residue Met401 coordinates adenosylcob(III)alamin.

The protein belongs to the EutB family. In terms of assembly, the basic unit is a heterodimer which dimerizes to form tetramers. The heterotetramers trimerize; 6 large subunits form a core ring with 6 small subunits projecting outwards. Requires adenosylcob(III)alamin as cofactor.

Its subcellular location is the bacterial microcompartment. The catalysed reaction is ethanolamine = acetaldehyde + NH4(+). The protein operates within amine and polyamine degradation; ethanolamine degradation. In terms of biological role, catalyzes the deamination of various vicinal amino-alcohols to oxo compounds. Allows this organism to utilize ethanolamine as the sole source of nitrogen and carbon in the presence of vitamin B12. The sequence is that of Ethanolamine ammonia-lyase large subunit from Escherichia coli O157:H7.